The primary structure comprises 452 residues: Exodeoxyribonuclease 7 large subunit (452 aa).

It belongs to the XseA family. In terms of assembly, heterooligomer composed of large and small subunits.

The protein resides in the cytoplasm. It catalyses the reaction Exonucleolytic cleavage in either 5'- to 3'- or 3'- to 5'-direction to yield nucleoside 5'-phosphates.. Bidirectionally degrades single-stranded DNA into large acid-insoluble oligonucleotides, which are then degraded further into small acid-soluble oligonucleotides. The polypeptide is Exodeoxyribonuclease 7 large subunit (Bacillus cereus (strain ATCC 10987 / NRS 248)).